Consider the following 122-residue polypeptide: Small ribosomal subunit protein bS16 (122 aa).

The interval 81 to 122 (GLMKRDAKNNPKKGEPGEKAKERAKERAEKAAAGSTEDAAAE) is disordered. A compositionally biased stretch (basic and acidic residues) spans 83 to 110 (MKRDAKNNPKKGEPGEKAKERAKERAEK). The span at 111–122 (AAAGSTEDAAAE) shows a compositional bias: low complexity.

It belongs to the bacterial ribosomal protein bS16 family.

This Xanthobacter autotrophicus (strain ATCC BAA-1158 / Py2) protein is Small ribosomal subunit protein bS16.